Consider the following 149-residue polypeptide: MKRPARPVLKLSLQFADASHRAQLPRHKVLRWIRAALDVPAEITVRIVGTDEGRALNRDYRQKDYATNVLTFDYEAEPVVVADLILCAPVVEREARDEGRSLEAHYAHLLVHGTLHAQGHDHEIEAEAQAMEARETEVLRALGYADPYA.

Residues His-112, His-116, and His-122 each contribute to the Zn(2+) site.

The protein belongs to the endoribonuclease YbeY family. Zn(2+) is required as a cofactor.

Its subcellular location is the cytoplasm. Functionally, single strand-specific metallo-endoribonuclease involved in late-stage 70S ribosome quality control and in maturation of the 3' terminus of the 16S rRNA. This Methylibium petroleiphilum (strain ATCC BAA-1232 / LMG 22953 / PM1) protein is Endoribonuclease YbeY.